Consider the following 226-residue polypeptide: MKVTFLGHAVVLIEGKKNIIIDPFISGNPVCPVKLEDLPKIDYILVTHGHGDHLGDAVEIAKKNDATVISNYEICHYLGKKGVKTHAMHIGGSYLFDFGRVKMTPAVHGSGILDGDSMIYGGNPAGFLITLERKKIYHAGDTGLTREMELLGEENVDVAFLPIGGNFVMDVEDAVRATAMIKPKKVVPMHYGTWELIFADVELFKKKVTEMSVECVILEPGESLEL.

The protein belongs to the UPF0173 family.

This is UPF0173 metal-dependent hydrolase Tpet_1587 from Thermotoga petrophila (strain ATCC BAA-488 / DSM 13995 / JCM 10881 / RKU-1).